Here is a 427-residue protein sequence, read N- to C-terminus: 3-phosphoshikimate 1-carboxyvinyltransferase (427 aa).

Positions 20, 21, and 25 each coordinate 3-phosphoshikimate. Position 20 (Lys20) interacts with phosphoenolpyruvate. 2 residues coordinate phosphoenolpyruvate: Gly92 and Arg120. 3-phosphoshikimate-binding residues include Ser166, Gln168, Asp312, and Lys339. Residue Gln168 coordinates phosphoenolpyruvate. The Proton acceptor role is filled by Asp312. The phosphoenolpyruvate site is built by Arg343 and Arg385.

The protein belongs to the EPSP synthase family. In terms of assembly, monomer.

The protein localises to the cytoplasm. It carries out the reaction 3-phosphoshikimate + phosphoenolpyruvate = 5-O-(1-carboxyvinyl)-3-phosphoshikimate + phosphate. The protein operates within metabolic intermediate biosynthesis; chorismate biosynthesis; chorismate from D-erythrose 4-phosphate and phosphoenolpyruvate: step 6/7. Functionally, catalyzes the transfer of the enolpyruvyl moiety of phosphoenolpyruvate (PEP) to the 5-hydroxyl of shikimate-3-phosphate (S3P) to produce enolpyruvyl shikimate-3-phosphate and inorganic phosphate. The polypeptide is 3-phosphoshikimate 1-carboxyvinyltransferase (Streptococcus equi subsp. zooepidemicus (strain MGCS10565)).